A 418-amino-acid chain; its full sequence is Histidine--tRNA ligase (418 aa).

Belongs to the class-II aminoacyl-tRNA synthetase family.

The protein resides in the cytoplasm. It catalyses the reaction tRNA(His) + L-histidine + ATP = L-histidyl-tRNA(His) + AMP + diphosphate + H(+). The sequence is that of Histidine--tRNA ligase from Methanococcus maripaludis (strain C7 / ATCC BAA-1331).